A 151-amino-acid polypeptide reads, in one-letter code: Small ribosomal subunit protein uS15 (151 aa).

It belongs to the universal ribosomal protein uS15 family.

This chain is Small ribosomal subunit protein uS15 (RPS13), found in Candida maltosa (Yeast).